We begin with the raw amino-acid sequence, 309 residues long: Large ribosomal subunit protein mL45 (309 aa).

The protein belongs to the mitochondrion-specific ribosomal protein mL45 family. In terms of assembly, component of the mitochondrial ribosome large subunit (39S) which comprises a 16S rRNA and about 50 distinct proteins.

It localises to the mitochondrion. Its function is as follows. Component of the mitochondrial large ribosomal subunit (mt-LSU). Within the mitochondrial ribosomes, required to direct the nascent polypeptide toward the tunnel exit and position the exit at a distance from the membrane surface. This is Large ribosomal subunit protein mL45 (mrpl45) from Xenopus tropicalis (Western clawed frog).